A 144-amino-acid chain; its full sequence is MRQTTFVKHQEVKQKWFVIDAESKILGRLAAFVASRLRGKHYPHFTPNVDMGDKIIIINAEKILLTAKKEDQKLYYNHSGYPGGLRVRTAREMRAKKPIALLERAIYGMIPHTKLGDKQRKNLYVYSGSEHPHLGQNPEKLEVK.

The protein belongs to the universal ribosomal protein uL13 family. Part of the 50S ribosomal subunit.

Functionally, this protein is one of the early assembly proteins of the 50S ribosomal subunit, although it is not seen to bind rRNA by itself. It is important during the early stages of 50S assembly. In Mesomycoplasma hyopneumoniae (strain 232) (Mycoplasma hyopneumoniae), this protein is Large ribosomal subunit protein uL13.